The sequence spans 936 residues: Protocadherin gamma-A10 (936 aa).

The first 32 residues, 1-32 (MAAQRNRSKESKDCSGLVLLCLFFGIPWEAGA), serve as a signal peptide directing secretion. 6 consecutive Cadherin domains span residues 33–137 (RQIS…APKF), 138–246 (QAEN…APVF), 247–351 (TLPE…SPEL), 352–456 (TITS…PPTF), 457–566 (SQVS…APEI), and 574–687 (DGST…SPAN). The Extracellular portion of the chain corresponds to 33-696 (RQISYSIPEE…NSETSDLTLY (664 aa)). N51 carries N-linked (GlcNAc...) asparagine glycosylation. N423 and N549 each carry an N-linked (GlcNAc...) asparagine glycan. Residues 697–717 (LVVAVAAVSCVFLAFVIVLLA) form a helical membrane-spanning segment. The Cytoplasmic portion of the chain corresponds to 718-936 (HRLRRWHKSR…KKKSGKKEKK (219 aa)). Disordered regions lie at residues 806–845 (EDTPLVPQAPPNTDWRFSQAQRPGTSGSQNGDDTGTWPNN) and 906–936 (ATLTNAAGKRDGKAPAGGNGNKKKSGKKEKK). Residues 820–845 (WRFSQAQRPGTSGSQNGDDTGTWPNN) are compositionally biased toward polar residues. Basic residues predominate over residues 926–936 (NKKKSGKKEKK).

The protein localises to the cell membrane. In terms of biological role, potential calcium-dependent cell-adhesion protein. May be involved in the establishment and maintenance of specific neuronal connections in the brain. The polypeptide is Protocadherin gamma-A10 (PCDHGA10) (Homo sapiens (Human)).